Reading from the N-terminus, the 260-residue chain is Thiazole synthase (260 aa).

The active-site Schiff-base intermediate with DXP is the lysine 96. Residues glycine 157, 184 to 185, and 206 to 207 contribute to the 1-deoxy-D-xylulose 5-phosphate site; these read AG and NT.

This sequence belongs to the ThiG family. In terms of assembly, homotetramer. Forms heterodimers with either ThiH or ThiS.

The protein resides in the cytoplasm. It carries out the reaction [ThiS sulfur-carrier protein]-C-terminal-Gly-aminoethanethioate + 2-iminoacetate + 1-deoxy-D-xylulose 5-phosphate = [ThiS sulfur-carrier protein]-C-terminal Gly-Gly + 2-[(2R,5Z)-2-carboxy-4-methylthiazol-5(2H)-ylidene]ethyl phosphate + 2 H2O + H(+). It participates in cofactor biosynthesis; thiamine diphosphate biosynthesis. Catalyzes the rearrangement of 1-deoxy-D-xylulose 5-phosphate (DXP) to produce the thiazole phosphate moiety of thiamine. Sulfur is provided by the thiocarboxylate moiety of the carrier protein ThiS. In vitro, sulfur can be provided by H(2)S. In Bradyrhizobium sp. (strain ORS 278), this protein is Thiazole synthase.